Consider the following 31-residue polypeptide: MESFAYILILTLAIATLFFAIAFRDPPKIGK.

A helical transmembrane segment spans residues 3 to 23 (SFAYILILTLAIATLFFAIAF).

This sequence belongs to the PsbT family. As to quaternary structure, PSII is composed of 1 copy each of membrane proteins PsbA, PsbB, PsbC, PsbD, PsbE, PsbF, PsbH, PsbI, PsbJ, PsbK, PsbL, PsbM, PsbT, PsbX, PsbY, PsbZ, Psb30/Ycf12, peripheral proteins PsbO, CyanoQ (PsbQ), PsbU, PsbV and a large number of cofactors. It forms dimeric complexes.

It localises to the cellular thylakoid membrane. Found at the monomer-monomer interface of the photosystem II (PS II) dimer, plays a role in assembly and dimerization of PSII. PSII is a light-driven water plastoquinone oxidoreductase, using light energy to abstract electrons from H(2)O, generating a proton gradient subsequently used for ATP formation. The sequence is that of Photosystem II reaction center protein T from Synechococcus sp. (strain WH7803).